The primary structure comprises 141 residues: Hemoglobin subunit beta-C (141 aa).

The Globin domain occupies 1–141; it reads PNKALITGFW…VASALAHRYH (141 aa). Heme b is bound by residues H58 and H87.

It belongs to the globin family. Heterotetramer of two alpha chains and two beta chains. Red blood cells.

Functionally, involved in oxygen transport from the lung to the various peripheral tissues. In Ammotragus lervia (Barbary sheep), this protein is Hemoglobin subunit beta-C.